A 211-amino-acid polypeptide reads, in one-letter code: Redox-sensing transcriptional repressor Rex (211 aa).

Positions 13–52 (TYLRILEELEAQGVHRTSSEQLGELAQVTAFQVRKDLSYF) form a DNA-binding region, H-T-H motif. Residue 87 to 92 (GMGRLG) coordinates NAD(+).

The protein belongs to the transcriptional regulatory Rex family. Homodimer.

It localises to the cytoplasm. Its function is as follows. Modulates transcription in response to changes in cellular NADH/NAD(+) redox state. This is Redox-sensing transcriptional repressor Rex from Thermus aquaticus.